A 334-amino-acid polypeptide reads, in one-letter code: Inositol 2-dehydrogenase (334 aa).

This sequence belongs to the Gfo/Idh/MocA family. Homotetramer.

It catalyses the reaction myo-inositol + NAD(+) = scyllo-inosose + NADH + H(+). Functionally, involved in the oxidation of myo-inositol (MI) to 2-keto-myo-inositol (2KMI or 2-inosose). This Cereibacter sphaeroides (strain ATCC 17023 / DSM 158 / JCM 6121 / CCUG 31486 / LMG 2827 / NBRC 12203 / NCIMB 8253 / ATH 2.4.1.) (Rhodobacter sphaeroides) protein is Inositol 2-dehydrogenase.